The chain runs to 106 residues: UPF0060 membrane protein Mrad2831_0929 (106 aa).

Helical transmembrane passes span 3 to 23 (LLAY…FWAW), 30 to 50 (AWWT…LTLV), 59 to 79 (FAAY…LAEG), and 87 to 104 (LAGS…LLGR).

The protein belongs to the UPF0060 family.

The protein resides in the cell inner membrane. The sequence is that of UPF0060 membrane protein Mrad2831_0929 from Methylobacterium radiotolerans (strain ATCC 27329 / DSM 1819 / JCM 2831 / NBRC 15690 / NCIMB 10815 / 0-1).